The sequence spans 346 residues: Biotin synthase (346 aa).

Positions Gln38–Thr256 constitute a Radical SAM core domain. [4Fe-4S] cluster is bound by residues Cys53, Cys57, and Cys60. [2Fe-2S] cluster-binding residues include Cys97, Cys128, Cys188, and Arg260.

It belongs to the radical SAM superfamily. Biotin synthase family. In terms of assembly, homodimer. It depends on [4Fe-4S] cluster as a cofactor. Requires [2Fe-2S] cluster as cofactor.

The catalysed reaction is (4R,5S)-dethiobiotin + (sulfur carrier)-SH + 2 reduced [2Fe-2S]-[ferredoxin] + 2 S-adenosyl-L-methionine = (sulfur carrier)-H + biotin + 2 5'-deoxyadenosine + 2 L-methionine + 2 oxidized [2Fe-2S]-[ferredoxin]. Its pathway is cofactor biosynthesis; biotin biosynthesis; biotin from 7,8-diaminononanoate: step 2/2. Its function is as follows. Catalyzes the conversion of dethiobiotin (DTB) to biotin by the insertion of a sulfur atom into dethiobiotin via a radical-based mechanism. This is Biotin synthase from Salmonella newport (strain SL254).